A 94-amino-acid chain; its full sequence is DNA-binding protein HU (94 aa).

The protein belongs to the bacterial histone-like protein family. Homodimer.

In terms of biological role, histone-like DNA-binding protein which is capable of wrapping DNA to stabilize it, and thus to prevent its denaturation under extreme environmental conditions. It is essential for heterocyst differentiation. The polypeptide is DNA-binding protein HU (hup) (Nostoc sp. (strain PCC 7120 / SAG 25.82 / UTEX 2576)).